We begin with the raw amino-acid sequence, 251 residues long: Chloride intracellular channel protein 5 (251 aa).

Residues 1-98 (MTDSATANGD…EEFLEETLTP (98 aa)) are required for insertion into the membrane. The G-site motif lies at 32–35 (CPFS). A helical membrane pass occupies residues 34–54 (FSQRLFMILWLKGVVFNVTTV). The GST C-terminal domain occupies 101–241 (YPKLAARHRE…AADSEIELAY (141 aa)).

Belongs to the chloride channel CLIC family. In terms of assembly, component of a multimeric complex consisting of several cytoskeletal proteins, including actin, ezrin, alpha-actinin, gelsolin, and IQGAP1. Interacts with AKAP9. Interacts with TPRN. TPRN, CLIC5 and PTPQR form concentric rings at the base of stereocilia and may form a complex. Interacts with EZR, MYO6 and RDX; the proteins may work together as a complex to stabilize linkages between the plasma membrane and subjacent actin cytoskeleton at the stereocilium base. As to expression, detected in cochlea, in cochlear and vestibular hair cell bundles in the organ of Corti (at protein level). Expressed neonatal and adult cardiomyocytes (at protein level).

Its subcellular location is the golgi apparatus. The protein resides in the cytoplasm. It localises to the cytoskeleton. The protein localises to the microtubule organizing center. It is found in the centrosome. Its subcellular location is the cell cortex. The protein resides in the membrane. It localises to the apical cell membrane. The protein localises to the mitochondrion. It is found in the cell projection. Its subcellular location is the stereocilium. It catalyses the reaction Na(+)(in) = Na(+)(out). It carries out the reaction K(+)(in) = K(+)(out). The enzyme catalyses chloride(in) = chloride(out). Inhibited by F-actin. Functionally, in the soluble state, catalyzes glutaredoxin-like thiol disulfide exchange reactions with reduced glutathione as electron donor. Can insert into membranes and form non-selective ion channels almost equally permeable to Na(+), K(+) and Cl(-). Required for normal hearing. It is necessary for the formation of stereocilia in the inner ear and normal development of the organ of Corti. May play a role in the regulation of transepithelial ion absorption and secretion. Is required for the development and/or maintenance of the proper glomerular endothelial cell and podocyte architecture. Plays a role in formation of the lens suture in the eye, which is important for normal optical properties of the lens. This is Chloride intracellular channel protein 5 (Clic5) from Rattus norvegicus (Rat).